The primary structure comprises 279 residues: S-methyl-5'-thioadenosine phosphorylase (279 aa).

Phosphate is bound by residues serine 13, 55-56 (RH), and 88-89 (TA). Methionine 191 lines the substrate pocket. Threonine 192 lines the phosphate pocket. 215 to 217 (DYD) provides a ligand contact to substrate.

It belongs to the PNP/MTAP phosphorylase family. MTAP subfamily. In terms of assembly, homotrimer.

The protein localises to the cytoplasm. The protein resides in the nucleus. The catalysed reaction is S-methyl-5'-thioadenosine + phosphate = 5-(methylsulfanyl)-alpha-D-ribose 1-phosphate + adenine. It functions in the pathway amino-acid biosynthesis; L-methionine biosynthesis via salvage pathway; S-methyl-5-thio-alpha-D-ribose 1-phosphate from S-methyl-5'-thioadenosine (phosphorylase route): step 1/1. Its function is as follows. Catalyzes the reversible phosphorylation of S-methyl-5'-thioadenosine (MTA) to adenine and 5-methylthioribose-1-phosphate. Involved in the breakdown of MTA, a major by-product of polyamine biosynthesis. Responsible for the first step in the methionine salvage pathway after MTA has been generated from S-adenosylmethionine. Has broad substrate specificity with 6-aminopurine nucleosides as preferred substrates. This chain is S-methyl-5'-thioadenosine phosphorylase, found in Aedes aegypti (Yellowfever mosquito).